An 828-amino-acid polypeptide reads, in one-letter code: Isethionate sulfite-lyase (828 aa).

One can recognise a PFL domain in the interval 30–698 (ERVFTILESF…VVSATPNGRK (669 aa)). Residues arginine 187, glutamine 191, 466 to 468 (CTE), and arginine 676 contribute to the 2-hydroxyethane-1-sulfonate site. The active-site Cysteine radical intermediate is cysteine 466. Residue glutamate 468 is the Proton acceptor of the active site. Residues 705-828 (DGSSASHGAD…LIARTGHDVM (124 aa)) enclose the Glycine radical domain. Glycine 803 carries the glycine radical modification.

It belongs to the glycyl radical enzyme (GRE) family. As to quaternary structure, homodimer. Post-translationally, requires the activating protein IseH to generate the key active site glycyl radical on Gly-803 that is involved in catalysis.

It catalyses the reaction 2-hydroxyethane-1-sulfonate = acetaldehyde + sulfite + H(+). Its pathway is organosulfur degradation; alkanesulfonate degradation. Its function is as follows. Involved in an anaerobic respiration pathway that converts the sulfonate isethionate (2-hydroxyethanesulfonate) to ammonia, acetate and sulfide. Catalyzes the radical-mediated C-S bond cleavage of isethionate (2-hydroxyethanesulfonate) to form sulfite and acetaldehyde. Shows no activity with taurine or ethanolamine as substrates. The protein is Isethionate sulfite-lyase of Nitratidesulfovibrio vulgaris (strain ATCC 29579 / DSM 644 / CCUG 34227 / NCIMB 8303 / VKM B-1760 / Hildenborough) (Desulfovibrio vulgaris).